The primary structure comprises 2979 residues: Polyketide synthase-nonribosomal peptide synthetase TwmB (2979 aa).

A Ketosynthase family 3 (KS3) domain is found at Gly-5–Ser-435. Catalysis depends on for beta-ketoacyl synthase activity residues Cys-176, His-315, and His-355. The tract at residues Val-549–Val-864 is malonyl-CoA:ACP transacylase (MAT) domain. Residue Ser-643 is the For malonyltransferase activity of the active site. Positions His-936–Ala-1070 are N-terminal hotdog fold. The tract at residues His-936–Ala-1234 is dehydratase (DH) domain. The region spanning His-936–Lys-1235 is the PKS/mFAS DH domain. His-968 acts as the Proton acceptor; for dehydratase activity in catalysis. The interval Leu-1085–Lys-1235 is C-terminal hotdog fold. Asp-1141 acts as the Proton donor; for dehydratase activity in catalysis. Residues Asn-1387 to Pro-1572 form an inactive methyltransferase (MT) domain region. The tract at residues Thr-2098–Val-2271 is ketoreductase (KR)domain. The region spanning Arg-2380 to Ile-2465 is the Carrier domain. An O-(pantetheine 4'-phosphoryl)serine modification is found at Ser-2425. Residues Tyr-2476 to Asp-2497 form a disordered region. The segment covering Glu-2479–Asp-2497 has biased composition (polar residues). The tract at residues Lys-2534–Glu-2970 is condensation.

In terms of assembly, interacts with TwmE. The cofactor is pantetheine 4'-phosphate.

It catalyses the reaction 5-aminopentanoate + 7 malonyl-CoA + acetyl-CoA + 11 NADPH + 17 H(+) = wortmanamide A + 7 CO2 + 11 NADP(+) + 8 CoA + 6 H2O. The enzyme catalyses 5-aminopentanoate + 8 malonyl-CoA + acetyl-CoA + 13 NADPH + 20 H(+) = wortmanamide B + 8 CO2 + 13 NADP(+) + 9 CoA + 7 H2O. It functions in the pathway secondary metabolite biosynthesis. Polyketide synthase-nonribosomal peptide synthetase; part of the gene cluster that mediates the biosynthesis of wortmanamides A and B, reduced long-chain polyketides amidated with a specific omega-amino acid, 5-aminopentanoic acid (5PA). The PKS modules of TwmB are involved in the synthesis of the polyketide backbone, whereas the non-canonical C domain of TwmB is a bonafide condensation domain that specifically selects 5PA and catalyzes amidation to release polyketide chain. The C domain clearly prefers C16 and C18 fatty acyl substrates, which is consistent with simultaneous formation of both octaketide and nonaketide acyl amides wortmanamides A and B. Because TwmB lacks a designated enoylreductase (ER) domain, the required activity is provided the enoyl reductase TwmE. The roles of the remaining enzymes have still to be clarified. This is Polyketide synthase-nonribosomal peptide synthetase TwmB from Talaromyces wortmannii (Penicillium wortmannii).